Consider the following 472-residue polypeptide: Argininosuccinate lyase (472 aa).

It belongs to the lyase 1 family. Argininosuccinate lyase subfamily.

It is found in the cytoplasm. The catalysed reaction is 2-(N(omega)-L-arginino)succinate = fumarate + L-arginine. The protein operates within amino-acid biosynthesis; L-arginine biosynthesis; L-arginine from L-ornithine and carbamoyl phosphate: step 3/3. The polypeptide is Argininosuccinate lyase (Maricaulis maris (strain MCS10) (Caulobacter maris)).